The primary structure comprises 492 residues: Malonate-semialdehyde dehydrogenase (492 aa).

Residues phenylalanine 156, lysine 180, glutamate 183, lysine 184, serine 233, and threonine 255 each contribute to the NAD(+) site. The active-site Nucleophile is the cysteine 288. Glutamate 387 provides a ligand contact to NAD(+).

It belongs to the aldehyde dehydrogenase family. IolA subfamily. Homotetramer.

The catalysed reaction is 3-oxopropanoate + NAD(+) + CoA + H2O = hydrogencarbonate + acetyl-CoA + NADH + H(+). The enzyme catalyses 2-methyl-3-oxopropanoate + NAD(+) + CoA + H2O = propanoyl-CoA + hydrogencarbonate + NADH + H(+). Its pathway is polyol metabolism; myo-inositol degradation into acetyl-CoA; acetyl-CoA from myo-inositol: step 7/7. Its function is as follows. Catalyzes the oxidation of malonate semialdehyde (MSA) and methylmalonate semialdehyde (MMSA) into acetyl-CoA and propanoyl-CoA, respectively. Is involved in a myo-inositol catabolic pathway. Bicarbonate, and not CO2, is the end-product of the enzymatic reaction. In Lacticaseibacillus casei (Lactobacillus casei), this protein is Malonate-semialdehyde dehydrogenase.